The primary structure comprises 283 residues: Pantothenate synthetase (283 aa).

30 to 37 (MGALHEGH) contributes to the ATP binding site. The active-site Proton donor is the histidine 37. Glutamine 61 lines the (R)-pantoate pocket. Position 61 (glutamine 61) interacts with beta-alanine. Residue 147–150 (GEKD) coordinates ATP. Glutamine 153 serves as a coordination point for (R)-pantoate. ATP-binding positions include valine 176 and 184 to 187 (VSSR).

It belongs to the pantothenate synthetase family. As to quaternary structure, homodimer.

The protein localises to the cytoplasm. The catalysed reaction is (R)-pantoate + beta-alanine + ATP = (R)-pantothenate + AMP + diphosphate + H(+). It functions in the pathway cofactor biosynthesis; (R)-pantothenate biosynthesis; (R)-pantothenate from (R)-pantoate and beta-alanine: step 1/1. In terms of biological role, catalyzes the condensation of pantoate with beta-alanine in an ATP-dependent reaction via a pantoyl-adenylate intermediate. This Chlorobium luteolum (strain DSM 273 / BCRC 81028 / 2530) (Pelodictyon luteolum) protein is Pantothenate synthetase.